The chain runs to 203 residues: Protein GrpE (203 aa).

Residues 1-20 (MSDNGDNNTKSPQHNNPQPN) show a composition bias toward polar residues. Residues 1 to 46 (MSDNGDNNTKSPQHNNPQPNEKSDGKVQPGQPQVNPQRKFTAGINK) are disordered.

It belongs to the GrpE family. Homodimer.

It localises to the cytoplasm. In terms of biological role, participates actively in the response to hyperosmotic and heat shock by preventing the aggregation of stress-denatured proteins, in association with DnaK and GrpE. It is the nucleotide exchange factor for DnaK and may function as a thermosensor. Unfolded proteins bind initially to DnaJ; upon interaction with the DnaJ-bound protein, DnaK hydrolyzes its bound ATP, resulting in the formation of a stable complex. GrpE releases ADP from DnaK; ATP binding to DnaK triggers the release of the substrate protein, thus completing the reaction cycle. Several rounds of ATP-dependent interactions between DnaJ, DnaK and GrpE are required for fully efficient folding. This is Protein GrpE from Ehrlichia chaffeensis (strain ATCC CRL-10679 / Arkansas).